Consider the following 460-residue polypeptide: uncharacterized protein (460 aa).

The segment at residues 1–33 is a signal peptide (tat-type signal); that stretch reads MKESNSRREFLSQSGKMVTAAALFGTSVPLAHA.

This sequence belongs to the metallo-dependent hydrolases superfamily. Exported by the Tat system. The position of the signal peptide cleavage has not been experimentally proven. Can also be exported by the Sec system.

This is an uncharacterized protein from Escherichia coli (strain K12).